The chain runs to 689 residues: Protein SDA1 homolog (689 aa).

Positions K254 to D319 form a coiled coil. 2 disordered regions span residues E485–W512 and K606–K689. Residues S668–L681 are compositionally biased toward basic and acidic residues.

Belongs to the SDA1 family.

Its subcellular location is the nucleus. The protein resides in the nucleolus. In terms of biological role, required for 60S pre-ribosomal subunits export to the cytoplasm. The protein is Protein SDA1 homolog (sdad1) of Xenopus tropicalis (Western clawed frog).